The chain runs to 251 residues: CDP-diacylglycerol pyrophosphatase (251 aa).

The chain crosses the membrane as a helical span at residues 4–24 (AGLLFLVMIVIAVVAAGIGYW).

This sequence belongs to the Cdh family.

It is found in the cell inner membrane. The enzyme catalyses a CDP-1,2-diacyl-sn-glycerol + H2O = a 1,2-diacyl-sn-glycero-3-phosphate + CMP + 2 H(+). It participates in phospholipid metabolism; CDP-diacylglycerol degradation; phosphatidate from CDP-diacylglycerol: step 1/1. This is CDP-diacylglycerol pyrophosphatase from Shigella boydii serotype 4 (strain Sb227).